The primary structure comprises 182 residues: NADH-quinone oxidoreductase subunit C 2 (182 aa).

The segment at 153–182 is disordered; the sequence is YKDKLNPFGAEGPPPTQPDLATNDIPQGGR.

It belongs to the complex I 30 kDa subunit family. In terms of assembly, NDH-1 is composed of 14 different subunits. Subunits NuoB, C, D, E, F, and G constitute the peripheral sector of the complex.

The protein localises to the cell inner membrane. The catalysed reaction is a quinone + NADH + 5 H(+)(in) = a quinol + NAD(+) + 4 H(+)(out). In terms of biological role, NDH-1 shuttles electrons from NADH, via FMN and iron-sulfur (Fe-S) centers, to quinones in the respiratory chain. The immediate electron acceptor for the enzyme in this species is believed to be ubiquinone. Couples the redox reaction to proton translocation (for every two electrons transferred, four hydrogen ions are translocated across the cytoplasmic membrane), and thus conserves the redox energy in a proton gradient. This Rhizobium meliloti (strain 1021) (Ensifer meliloti) protein is NADH-quinone oxidoreductase subunit C 2.